A 241-amino-acid polypeptide reads, in one-letter code: Ribulose-phosphate 3-epimerase 1 (241 aa).

Ser21 is a binding site for substrate. 3 residues coordinate a divalent metal cation: His46, Asp48, and His79. Asp48 functions as the Proton acceptor in the catalytic mechanism. Residues His79, 155 to 158 (GFGG), 192 to 194 (DGG), and 214 to 215 (GS) contribute to the substrate site. Asp192 serves as a coordination point for a divalent metal cation. Asp192 serves as the catalytic Proton donor.

Belongs to the ribulose-phosphate 3-epimerase family. A divalent metal cation serves as cofactor.

It carries out the reaction D-ribulose 5-phosphate = D-xylulose 5-phosphate. The protein operates within carbohydrate degradation. Catalyzes the reversible epimerization of D-ribulose 5-phosphate to D-xylulose 5-phosphate. The sequence is that of Ribulose-phosphate 3-epimerase 1 from Cupriavidus necator (strain ATCC 17699 / DSM 428 / KCTC 22496 / NCIMB 10442 / H16 / Stanier 337) (Ralstonia eutropha).